Consider the following 487-residue polypeptide: GPI mannosyltransferase 1 (487 aa).

3 helical membrane-spanning segments follow: residues 26–46 (PLPL…YGLW), 87–107 (ILAW…GPWA), and 121–141 (VLFA…LVMG). The tract at residues 147–175 (SAAKGKEKDTEKTKEGGKKGPSVTASTGM) is disordered. Residues 150–164 (KGKEKDTEKTKEGGK) are compositionally biased toward basic and acidic residues. The next 7 membrane-spanning stretches (helical) occupy residues 205–225 (LLGV…ITLA), 227–247 (LLLG…PAIV), 289–309 (LLLA…MYRL), 359–379 (IESL…PLTL), 393–413 (FAFV…YLVL), 429–449 (MGLV…QQAY), and 462–482 (GLWM…GVIV).

Belongs to the PIGM family.

The protein resides in the endoplasmic reticulum membrane. Its pathway is glycolipid biosynthesis; glycosylphosphatidylinositol-anchor biosynthesis. Its function is as follows. Mannosyltransferase involved in glycosylphosphatidylinositol-anchor biosynthesis. Transfers the first alpha-1,4-mannose to GlcN-acyl-PI during GPI precursor assembly. Required for cell wall integrity. The polypeptide is GPI mannosyltransferase 1 (gim-1) (Neurospora crassa (strain ATCC 24698 / 74-OR23-1A / CBS 708.71 / DSM 1257 / FGSC 987)).